Here is a 371-residue protein sequence, read N- to C-terminus: Diguanylate cyclase A (371 aa).

Residues 233 to 366 (ETLSILMIDI…GRNRVTLSKN (134 aa)) form the GGDEF domain. 3 residues coordinate Mg(2+): D241, I242, and E284. The active-site Proton acceptor is E284.

Exists as a homodimer and as larger aggregates. Both dimers and aggregates possess DGC activity. Mg(2+) serves as cofactor. The cofactor is Mn(2+).

The protein resides in the cytoplasm. It carries out the reaction 2 GTP = 3',3'-c-di-GMP + 2 diphosphate. Allosterically regulated by a feedback inhibition loop. Functionally, catalyzes the conversion of GTP to cyclic-di-GMP (c-di-GMP). Shows activity under aerobic and anaerobic reaction conditions. The sequence is that of Diguanylate cyclase A from Treponema denticola (strain ATCC 35405 / DSM 14222 / CIP 103919 / JCM 8153 / KCTC 15104).